The following is a 707-amino-acid chain: Elongation factor G (707 aa).

Residues 8–297 (ERVRNIGIAA…AVLDYLPSPL (290 aa)) form the tr-type G domain. GTP-binding positions include 17–24 (AHIDAGKT), 96–100 (DTPGH), and 150–153 (NKMD).

This sequence belongs to the TRAFAC class translation factor GTPase superfamily. Classic translation factor GTPase family. EF-G/EF-2 subfamily.

The protein localises to the cytoplasm. Catalyzes the GTP-dependent ribosomal translocation step during translation elongation. During this step, the ribosome changes from the pre-translocational (PRE) to the post-translocational (POST) state as the newly formed A-site-bound peptidyl-tRNA and P-site-bound deacylated tRNA move to the P and E sites, respectively. Catalyzes the coordinated movement of the two tRNA molecules, the mRNA and conformational changes in the ribosome. The chain is Elongation factor G from Gloeobacter violaceus (strain ATCC 29082 / PCC 7421).